The chain runs to 133 residues: Ribosome-binding factor A (133 aa).

The protein belongs to the RbfA family. In terms of assembly, monomer. Binds 30S ribosomal subunits, but not 50S ribosomal subunits or 70S ribosomes.

The protein localises to the cytoplasm. In terms of biological role, one of several proteins that assist in the late maturation steps of the functional core of the 30S ribosomal subunit. Associates with free 30S ribosomal subunits (but not with 30S subunits that are part of 70S ribosomes or polysomes). Required for efficient processing of 16S rRNA. May interact with the 5'-terminal helix region of 16S rRNA. This chain is Ribosome-binding factor A, found in Proteus mirabilis (strain HI4320).